A 206-amino-acid polypeptide reads, in one-letter code: Fibroblast growth factor 4 (206 aa).

Residues methionine 1–alanine 29 form the signal peptide.

The protein belongs to the heparin-binding growth factors family. Interacts with FGFR1, FGFR2, FGFR3 and FGFR4. Affinity between fibroblast growth factors (FGFs) and their receptors is increased by heparan sulfate glycosaminoglycans that function as coreceptors.

Its subcellular location is the secreted. Functionally, plays an important role in the regulation of embryonic development, cell proliferation, and cell differentiation. Required for normal limb and cardiac valve development during embryogenesis. May play a role in embryonic molar tooth bud development via inducing the expression of MSX1, MSX2 and MSX1-mediated expression of SDC1 in dental mesenchyme cells. In Bos taurus (Bovine), this protein is Fibroblast growth factor 4.